Consider the following 310-residue polypeptide: Small ribosomal subunit biogenesis GTPase RsgA (310 aa).

In terms of domain architecture, CP-type G spans 77–238 (LSKQSHILAA…IIDTPGIKGF (162 aa)). Residues 126-129 (NKTD) and 180-188 (GNSGVGKST) contribute to the GTP site. Residues Cys262, Cys267, His269, and Cys275 each contribute to the Zn(2+) site.

The protein belongs to the TRAFAC class YlqF/YawG GTPase family. RsgA subfamily. In terms of assembly, monomer. Associates with 30S ribosomal subunit, binds 16S rRNA. Requires Zn(2+) as cofactor.

It localises to the cytoplasm. In terms of biological role, one of several proteins that assist in the late maturation steps of the functional core of the 30S ribosomal subunit. Helps release RbfA from mature subunits. May play a role in the assembly of ribosomal proteins into the subunit. Circularly permuted GTPase that catalyzes slow GTP hydrolysis, GTPase activity is stimulated by the 30S ribosomal subunit. The sequence is that of Small ribosomal subunit biogenesis GTPase RsgA from Phocaeicola vulgatus (strain ATCC 8482 / DSM 1447 / JCM 5826 / CCUG 4940 / NBRC 14291 / NCTC 11154) (Bacteroides vulgatus).